The primary structure comprises 1038 residues: MKSDFLTSTTHFNPSIFLPKIPSRNSRISIKSSSSSSKVRPDPWSLSDGNPEKPKPRYERPKHPLSDDDARRIIKKKAQYLSTLRRNQGSQAMTPKWIKRTPEQMVQYLEDDRNGQMYGKHVVAAIKTVRGLSQRRQGSDDMRFVMSSFVAKLSFRDMCVVLKEQRGWRQVRDFFSWMKLQLSYRPSVVVYTIVLRLYGQVGKIKMAEETFLEMLEVGCEPDAVACGTMLCTYARWGRHSAMLTFYKAVQERRILLSTSVYNFMLSSLQKKSFHGKVIDLWLEMVEEGVPPNEFTYTLVVSSYAKQGFKEEALKAFGEMKSLGFVPEEVTYSSVISLSVKAGDWEKAIGLYEDMRSQGIVPSNYTCATMLSLYYKTENYPKALSLFADMERNKIPADEVIRGLIIRIYGKLGLFHDAQSMFEETERLNLLADEKTYLAMSQVHLNSGNVVKALDVIEMMKTRDIPLSRFAYIVMLQCYAKIQNVDCAEEAFRALSKTGLPDASSCNDMLNLYTRLNLGEKAKGFIKQIMVDQVHFDIELYKTAMRVYCKEGMVAEAQDLIVKMGREARVKDNRFVQTLAESMHIVNKHDKHEAVLNVSQLDVMALGLMLNLRLKEGNLNETKAILNLMFKTDLGSSAVNRVISSFVREGDVSKAEMIADIIIRLGLRMEEETIATLIAVYGRQHKLKEAKRLYLAAGESKTPGKSVIRSMIDAYVRCGWLEDAYGLFMESAEKGCDPGAVTISILVNALTNRGKHREAEHISRTCLEKNIELDTVGYNTLIKAMLEAGKLQCASEIYERMHTSGVPCSIQTYNTMISVYGRGLQLDKAIEIFSNARRSGLYLDEKIYTNMIMHYGKGGKMSEALSLFSEMQKKGIKPGTPSYNMMVKICATSRLHHEVDELLQAMERNGRCTDLSTYLTLIQVYAESSQFAEAEKTITLVKEKGIPLSHSHFSSLLSALVKAGMMEEAERTYCKMSEAGISPDSACKRTILKGYMTCGDAEKGILFYEKMIRSSVEDDRFVSSVVEDLYKAVGKEQDV.

Residues 23–38 (SRNSRISIKSSSSSSK) show a composition bias toward low complexity. The tract at residues 23-69 (SRNSRISIKSSSSSSKVRPDPWSLSDGNPEKPKPRYERPKHPLSDDD) is disordered. Residues 50–69 (NPEKPKPRYERPKHPLSDDD) show a composition bias toward basic and acidic residues. PPR repeat units lie at residues 187-221 (SVVV…GCEP), 222-256 (DAVA…RILL), 257-291 (STSV…GVPP), 292-326 (NEFT…GFVP), 327-361 (EEVT…GIVP), 362-396 (SNYT…KIPA), 397-431 (DEVI…NLLA), 432-466 (DEKT…DIPL), 467-501 (SRFA…GLPD), 502-535 (ASSC…QVHF), 536-570 (DIEL…ARVK), 601-631 (DVMA…MFKT), 634-668 (GSSA…GLRM), 669-699 (EEET…AGES), 703-737 (GKSV…GCDP), 738-772 (GAVT…NIEL), 773-807 (DTVG…GVPC), 808-842 (SIQT…GLYL), 843-877 (DEKI…GIKP), 878-912 (GTPS…GRCT), 913-947 (DLST…GIPL), 948-982 (SHSH…GISP), and 983-1017 (DSAC…SVED).

The protein belongs to the PPR family. P subfamily.

The protein is Pentatricopeptide repeat-containing protein At5g27270 (EMB976) of Arabidopsis thaliana (Mouse-ear cress).